We begin with the raw amino-acid sequence, 1019 residues long: Collagen alpha-2(VI) chain (1019 aa).

A signal peptide spans 1–20 (MLQGTCSVLLLWGILGAIQA). Residues 21-256 (QQQEVISPDT…YKVSCLEIPG (236 aa)) form a nonhelical region region. The region spanning 46–234 (HVYFVLDTSE…EIDQDTINRI (189 aa)) is the VWFA 1 domain. An N-linked (GlcNAc...) asparagine glycan is attached at Asn-140. Positions 257–588 (PSGPKGYRGQ…GEPGPPGDPG (332 aa)) are disordered. The tract at residues 257-590 (PSGPKGYRGQ…PGPPGDPGLT (334 aa)) is triple-helical region. Residues 287–305 (DPGIEGPIGFPGPKGVPGF) are compositionally biased toward low complexity. The span at 306–318 (KGEKGEFGADGRK) shows a compositional bias: basic and acidic residues. N-linked (GlcNAc...) asparagine glycosylation occurs at Asn-327. Composition is skewed to basic and acidic residues over residues 365-377 (ERGD…DPGR) and 419-429 (PKGEPGRRGDP). 5 short sequence motifs (cell attachment site) span residues 366 to 368 (RGD), 426 to 428 (RGD), 489 to 491 (RGD), 498 to 500 (RGD), and 539 to 541 (RGD). Positions 524 to 557 (PGEKGEPGPRGPEGGRGDFGLKGEPGRKGEKGEP) are enriched in basic and acidic residues. The segment covering 559–569 (DPGPPGEPGPR) has biased composition (pro residues). The segment at 591–1019 (ECDVMTYVRE…FFDRFIRWIC (429 aa)) is nonhelical region. VWFA domains follow at residues 615 to 805 (DVVF…EDVL) and 833 to 1014 (DIVF…FDRF). N-linked (GlcNAc...) asparagine glycosylation is present at Asn-630. A Phosphothreonine modification is found at Thr-701. At Ser-705 the chain carries Phosphoserine. 3 N-linked (GlcNAc...) asparagine glycosylation sites follow: Asn-785, Asn-897, and Asn-954.

The protein belongs to the type VI collagen family. In terms of assembly, trimers composed of three different chains: alpha-1(VI), alpha-2(VI), and alpha-3(VI) or alpha-5(VI) or alpha-6(VI). Interacts with CSPG4. Prolines at the third position of the tripeptide repeating unit (G-X-Y) are hydroxylated in some or all of the chains.

It is found in the secreted. The protein resides in the extracellular space. It localises to the extracellular matrix. The protein localises to the membrane. Its function is as follows. Collagen VI acts as a cell-binding protein. This is Collagen alpha-2(VI) chain (COL6A2) from Homo sapiens (Human).